The sequence spans 280 residues: Probable ketoamine kinase lp_1983 (280 aa).

87–89 (DWL) is an ATP binding site. Aspartate 189 functions as the Proton acceptor in the catalytic mechanism.

The protein belongs to the fructosamine kinase family.

It carries out the reaction N(6)-(D-ribulosyl)-L-lysine + ATP = N(6)-(3-O-phospho-D-ribulosyl)-L-lysine + ADP + H(+). It catalyses the reaction N-(D-ribulosyl)-cadaverine + ATP = N-(3-O-phospho-D-ribulosyl)-cadaverine + ADP + H(+). The enzyme catalyses N(6)-(D-erythrulosyl)-L-lysine + ATP = N(6)-(3-O-phospho-D-erythrulosyl)-L-lysine + ADP + H(+). The catalysed reaction is N-(D-erythrulosyl)-cadaverine + ATP = N-(3-O-phospho-D-erythrulosyl)-cadaverine + ADP + H(+). It carries out the reaction N(6)-D-ribulosyl-L-lysyl-[protein] + ATP = N(6)-(3-O-phospho-D-ribulosyl)-L-lysyl-[protein] + ADP + H(+). It catalyses the reaction N(6)-(D-erythrulosyl)-L-lysyl-[protein] + ATP = N(6)-(3-O-phospho-D-erythrulosyl)-L-lysyl-[protein] + ADP + H(+). Ketoamine kinase that phosphorylates ketoamines, such as erythruloselysine, erythrulosecadaverine, ribuloselysine and ribulosecadaverine, on the third carbon of the sugar moiety to generate ketoamine 3-phosphate. Has higher activity on free lysine (erythruloselysine and ribuloselysine), than on ribuloselysine and erythruloselysine residues on glycated proteins. This Lactiplantibacillus plantarum (strain ATCC BAA-793 / NCIMB 8826 / WCFS1) (Lactobacillus plantarum) protein is Probable ketoamine kinase lp_1983.